The chain runs to 144 residues: 3-dehydroquinate dehydratase (144 aa).

Tyr23 acts as the Proton acceptor in catalysis. The substrate site is built by Asn74, His80, and Asp87. His100 (proton donor) is an active-site residue. Substrate is bound by residues 101–102 (LS) and Arg111.

This sequence belongs to the type-II 3-dehydroquinase family. In terms of assembly, homododecamer.

The enzyme catalyses 3-dehydroquinate = 3-dehydroshikimate + H2O. It participates in metabolic intermediate biosynthesis; chorismate biosynthesis; chorismate from D-erythrose 4-phosphate and phosphoenolpyruvate: step 3/7. In terms of biological role, catalyzes a trans-dehydration via an enolate intermediate. In Hydrogenovibrio crunogenus (strain DSM 25203 / XCL-2) (Thiomicrospira crunogena), this protein is 3-dehydroquinate dehydratase.